Reading from the N-terminus, the 464-residue chain is NADH dehydrogenase [ubiquinone] flavoprotein 1, mitochondrial (464 aa).

Residues 1–20 (MLATRRLLGWSLPARVSVRF) constitute a mitochondrion transit peptide. Position 81 is an N6-acetyllysine; alternate (Lys81). Lys81 carries the N6-succinyllysine; alternate modification. 87–96 (GRGGAGFPTG) contributes to the NADH binding site. N6-acetyllysine is present on Lys104. Residue 199-247 (RGAGAYICGEETALIESIEGKQGKPRLKPPFPADVGVFGCPTTVANVET) participates in FMN binding. Arg257 carries the omega-N-methylarginine modification. Lys375 carries the N6-acetyllysine modification. [4Fe-4S] cluster is bound by residues Cys379, Cys382, Cys385, and Cys425.

It belongs to the complex I 51 kDa subunit family. As to quaternary structure, core subunit of respiratory chain NADH dehydrogenase (Complex I) which is composed of 45 different subunits. This is a component of the flavoprotein-sulfur (FP) fragment of the enzyme. Interacts with RAB5IF. Requires FMN as cofactor. [4Fe-4S] cluster serves as cofactor.

The protein localises to the mitochondrion inner membrane. The enzyme catalyses a ubiquinone + NADH + 5 H(+)(in) = a ubiquinol + NAD(+) + 4 H(+)(out). Functionally, core subunit of the mitochondrial membrane respiratory chain NADH dehydrogenase (Complex I) which catalyzes electron transfer from NADH through the respiratory chain, using ubiquinone as an electron acceptor. Part of the peripheral arm of the enzyme, where the electrons from NADH are accepted by flavin mononucleotide (FMN) and then passed along a chain of iron-sulfur clusters by electron tunnelling to the final acceptor ubiquinone. Contains FMN, which is the initial electron acceptor as well as one iron-sulfur cluster. The polypeptide is NADH dehydrogenase [ubiquinone] flavoprotein 1, mitochondrial (Homo sapiens (Human)).